The primary structure comprises 150 residues: Mating pheromone 1 (150 aa).

Residues 1–16 (MKAIFIILAILMVTQA) form the signal peptide. Positions 17–52 (FKMTSKVNTKLQSQIQSKFQSKNKLASTFQTSSKLK) are excised as a propeptide.

The protein resides in the secreted. In terms of biological role, mating ciliate pheromones (or gamones) are diffusible extracellular communication signals that distinguish different intraspecific classes of cells commonly referred to as 'mating types'. They prepare the latter for conjugation by changing their cell surface properties. The chain is Mating pheromone 1 from Euplotoides octocarinatus (Freshwater ciliate).